Here is a 155-residue protein sequence, read N- to C-terminus: Small ribosomal subunit protein uS7cz/uS7cy (155 aa).

Belongs to the universal ribosomal protein uS7 family. In terms of assembly, part of the 30S ribosomal subunit.

It is found in the plastid. Its subcellular location is the chloroplast. Functionally, one of the primary rRNA binding proteins, it binds directly to 16S rRNA where it nucleates assembly of the head domain of the 30S subunit. The polypeptide is Small ribosomal subunit protein uS7cz/uS7cy (rps7-A) (Lemna minor (Common duckweed)).